The following is a 287-amino-acid chain: Coatomer subunit epsilon-1 (287 aa).

The protein belongs to the COPE family. As to quaternary structure, oligomeric complex that consists of at least the alpha, beta, beta', gamma, delta, epsilon and zeta subunits.

The protein resides in the cytoplasm. It localises to the golgi apparatus membrane. The protein localises to the cytoplasmic vesicle. Its subcellular location is the COPI-coated vesicle membrane. Functionally, the coatomer is a cytosolic protein complex that binds to dilysine motifs and reversibly associates with Golgi non-clathrin-coated vesicles, which further mediate biosynthetic protein transport from the ER, via the Golgi up to the trans Golgi network. The coatomer complex is required for budding from Golgi membranes, and is essential for the retrograde Golgi-to-ER transport of dilysine-tagged proteins. The sequence is that of Coatomer subunit epsilon-1 (COPE1) from Oryza sativa subsp. japonica (Rice).